Consider the following 543-residue polypeptide: NXPE family member 4 (543 aa).

The first 26 residues, 1-26 (MKTLASRKSLWMLLFIVIFWVSFTVF), serve as a signal peptide directing secretion. Asn-91, Asn-159, and Asn-223 each carry an N-linked (GlcNAc...) asparagine glycan.

It belongs to the NXPE family.

The protein resides in the secreted. This chain is NXPE family member 4 (Nxpe4), found in Mus musculus (Mouse).